The chain runs to 60 residues: MFTLKKSLLLLFFLATINLSLCEQERNAEEERRDDDERNAEVEKRFLPFVGNLLKGLLGK.

Residues 1–22 form the signal peptide; sequence MFTLKKSLLLLFFLATINLSLC. The propeptide at 23–43 is removed in mature form; the sequence is EQERNAEEERRDDDERNAEVE.

As to expression, expressed by the skin glands.

It localises to the secreted. Antimicrobial peptide active against a variety of Gram-positive and some Gram-negative bacterial strains. Has antifungal activity against a slime mold isolate. Has weak hemolytic activity against human erythrocytes. This Amolops chunganensis (Chungan torrent frog) protein is Temporin-CG1.